Here is a 176-residue protein sequence, read N- to C-terminus: Inner membrane-spanning protein YciB (176 aa).

The next 6 helical transmembrane spans lie at 3-23 (FLFD…WGIF), 24-44 (TATA…AFRH), 49-69 (TMLW…LVLH), 81-101 (LYWL…NNLI), 121-141 (VAWA…VHNF), and 149-169 (FKLF…SLWL).

This sequence belongs to the YciB family.

It is found in the cell inner membrane. In terms of biological role, plays a role in cell envelope biogenesis, maintenance of cell envelope integrity and membrane homeostasis. In Burkholderia vietnamiensis (strain G4 / LMG 22486) (Burkholderia cepacia (strain R1808)), this protein is Inner membrane-spanning protein YciB.